Reading from the N-terminus, the 215-residue chain is HTH-type transcriptional repressor FabR (215 aa).

The HTH tetR-type domain maps to 10-70; that stretch reads KTRRSLVEAA…TMVDESGLML (61 aa). Positions 33 to 52 form a DNA-binding region, H-T-H motif; it reads SLREVAREAGIAPTSFYRHF.

Homodimer.

The protein localises to the cytoplasm. Represses the transcription of fabB, involved in unsaturated fatty acid (UFA) biosynthesis. By controlling UFA production, FabR directly influences the physical properties of the membrane bilayer. The sequence is that of HTH-type transcriptional repressor FabR from Escherichia coli O139:H28 (strain E24377A / ETEC).